The sequence spans 757 residues: Xaa-Pro dipeptidyl-peptidase (757 aa).

Active-site charge relay system residues include Ser-348, Asp-468, and His-498.

It belongs to the peptidase S15 family. As to quaternary structure, homodimer.

It is found in the cytoplasm. It catalyses the reaction Hydrolyzes Xaa-Pro-|- bonds to release unblocked, N-terminal dipeptides from substrates including Ala-Pro-|-p-nitroanilide and (sequentially) Tyr-Pro-|-Phe-Pro-|-Gly-Pro-|-Ile.. Its function is as follows. Removes N-terminal dipeptides sequentially from polypeptides having unsubstituted N-termini provided that the penultimate residue is proline. The sequence is that of Xaa-Pro dipeptidyl-peptidase from Streptococcus pneumoniae (strain Hungary19A-6).